The sequence spans 417 residues: L-rhamnose isomerase (417 aa).

Mn(2+) is bound by residues His261, Asp293, and Asp295.

It belongs to the rhamnose isomerase family. Mn(2+) is required as a cofactor.

It is found in the cytoplasm. The catalysed reaction is L-rhamnopyranose = L-rhamnulose. Its pathway is carbohydrate degradation; L-rhamnose degradation; glycerone phosphate from L-rhamnose: step 1/3. In terms of biological role, catalyzes the interconversion of L-rhamnose and L-rhamnulose. The polypeptide is L-rhamnose isomerase (Oceanobacillus iheyensis (strain DSM 14371 / CIP 107618 / JCM 11309 / KCTC 3954 / HTE831)).